Reading from the N-terminus, the 565-residue chain is Sulfite reductase [NADPH] hemoprotein beta-component (565 aa).

4 residues coordinate [4Fe-4S] cluster: Cys429, Cys435, Cys474, and Cys478. Position 478 (Cys478) interacts with siroheme.

It belongs to the nitrite and sulfite reductase 4Fe-4S domain family. As to quaternary structure, alpha(8)-beta(8). The alpha component is a flavoprotein, the beta component is a hemoprotein. Siroheme serves as cofactor. [4Fe-4S] cluster is required as a cofactor.

It catalyses the reaction hydrogen sulfide + 3 NADP(+) + 3 H2O = sulfite + 3 NADPH + 4 H(+). It participates in sulfur metabolism; hydrogen sulfide biosynthesis; hydrogen sulfide from sulfite (NADPH route): step 1/1. Component of the sulfite reductase complex that catalyzes the 6-electron reduction of sulfite to sulfide. This is one of several activities required for the biosynthesis of L-cysteine from sulfate. In Shewanella putrefaciens (strain CN-32 / ATCC BAA-453), this protein is Sulfite reductase [NADPH] hemoprotein beta-component.